A 354-amino-acid chain; its full sequence is Guanine nucleotide-binding protein G(i) subunit alpha (354 aa).

Glycine 2 carries the N-myristoyl glycine lipid modification. Cysteine 3 carries S-palmitoyl cysteine lipidation. The 323-residue stretch at 32–354 (REVKLLLLGA…KNNLKDCGLF (323 aa)) folds into the G-alpha domain. A G1 motif region spans residues 35–48 (KLLLLGAGESGKST). GTP-binding positions include 40 to 47 (GAGESGKS), 175 to 181 (LRTRVKT), 200 to 204 (DVGGQ), 269 to 272 (NKKD), and alanine 326. Residues serine 47 and threonine 181 each contribute to the Mg(2+) site. The G2 motif stretch occupies residues 173–181 (DVLRTRVKT). Residues 196-205 (FKMFDVGGQR) form a G3 motif region. The G4 motif stretch occupies residues 265–272 (ILFLNKKD). Residues 324–329 (TCATDT) are G5 motif.

The protein belongs to the G-alpha family. G(i/o/t/z) subfamily. G proteins are composed of 3 units; alpha, beta and gamma. The alpha chain contains the guanine nucleotide binding site.

Functionally, guanine nucleotide-binding proteins (G proteins) are involved as modulators or transducers in various transmembrane signaling systems. This G protein is involved in 1-methyladenine-induced oocyte maturation. The chain is Guanine nucleotide-binding protein G(i) subunit alpha from Patiria pectinifera (Starfish).